Consider the following 72-residue polypeptide: Nod factor export ATP-binding protein I (72 aa).

Belongs to the ABC transporter superfamily. Lipooligosaccharide exporter (TC 3.A.1.102) family. The complex is composed of two ATP-binding proteins (NodI) and two transmembrane proteins (NodJ).

The protein localises to the cell inner membrane. Part of the ABC transporter complex NodIJ involved in the export of the nodulation factors (Nod factors), the bacterial signal molecules that induce symbiosis and subsequent nodulation induction. Nod factors are LCO (lipo-chitin oligosaccharide), a modified beta-1,4-linked N-acetylglucosamine oligosaccharide. This subunit is responsible for energy coupling to the transport system. The sequence is that of Nod factor export ATP-binding protein I from Rhizobium leguminosarum bv. trifolii.